The chain runs to 89 residues: Small ribosomal subunit protein uS14 (89 aa).

The protein belongs to the universal ribosomal protein uS14 family. Part of the 30S ribosomal subunit. Contacts proteins S3 and S10.

In terms of biological role, binds 16S rRNA, required for the assembly of 30S particles and may also be responsible for determining the conformation of the 16S rRNA at the A site. The polypeptide is Small ribosomal subunit protein uS14 (Flavobacterium johnsoniae (strain ATCC 17061 / DSM 2064 / JCM 8514 / BCRC 14874 / CCUG 350202 / NBRC 14942 / NCIMB 11054 / UW101) (Cytophaga johnsonae)).